A 520-amino-acid chain; its full sequence is GMP synthase [glutamine-hydrolyzing] (520 aa).

In terms of domain architecture, Glutamine amidotransferase type-1 spans 8-202 (RLLIIDFGSQ…FVRLAGFTGD (195 aa)). The active-site Nucleophile is the Cys86. Catalysis depends on residues His177 and Glu179. The 193-residue stretch at 203 to 395 (WTMDAYREQA…LGLPASFIGR (193 aa)) folds into the GMPS ATP-PPase domain. Position 230–236 (230–236 (SGGVDSS)) interacts with ATP.

Homodimer.

It catalyses the reaction XMP + L-glutamine + ATP + H2O = GMP + L-glutamate + AMP + diphosphate + 2 H(+). The protein operates within purine metabolism; GMP biosynthesis; GMP from XMP (L-Gln route): step 1/1. Catalyzes the synthesis of GMP from XMP. In Dinoroseobacter shibae (strain DSM 16493 / NCIMB 14021 / DFL 12), this protein is GMP synthase [glutamine-hydrolyzing].